Consider the following 951-residue polypeptide: Cadmium/zinc-transporting ATPase HMA2 (951 aa).

Residues 1–83 (MASKKMTKSY…VRVTGETNFK (83 aa)) lie on the Cytoplasmic side of the membrane. The 67-residue stretch at 7 to 73 (TKSYFDVLGI…ALNQAQLEAN (67 aa)) folds into the HMA domain. The chain crosses the membrane as a helical span at residues 84–105 (NKWPSPFAVVSGILLLLSFFKY). The Extracellular portion of the chain corresponds to 106–108 (LYS). A helical transmembrane segment spans residues 109–128 (PFRWLAVAAVVAGIYPILAK). Topologically, residues 129 to 135 (AVASLAR) are cytoplasmic. Residues 136–156 (FRIDINILVVVTVGATIGMQD) traverse the membrane as a helical segment. Residue Tyr157 is a topological domain, extracellular. Residues 158-178 (TEAAVVVFLFTIAEWLQSRAS) traverse the membrane as a helical segment. At 179–304 (YKASAVMQSL…KTETQRFIDK (126 aa)) the chain is on the cytoplasmic side. A helical membrane pass occupies residues 305-327 (CSKYYTPAIILISICFVAIPFAL). The Extracellular segment spans residues 328–335 (KVHNLKHW). Residues 336–353 (VHLALVVLVSACPCGLIL) form a helical membrane-spanning segment. Residues 354-647 (STPVATFCAL…KLAKRAKRKV (294 aa)) lie on the Cytoplasmic side of the membrane. The active-site 4-aspartylphosphate intermediate is Asp391. 2 residues coordinate Mg(2+): Asp592 and Asp596. Residues 648–667 (VENVVISITMKGAILALAFA) traverse the membrane as a helical segment. The Extracellular portion of the chain corresponds to 668–671 (GHPL). Residues 672-691 (IWAAVLADVGTCLLVILNSM) traverse the membrane as a helical segment. At 692–951 (LLLSDKHKTG…VGTLKEIVIE (260 aa)) the chain is on the cytoplasmic side. Residues 841 to 851 (ELQQSCHDKPS) are compositionally biased toward basic and acidic residues. The disordered stretch occupies residues 841-866 (ELQQSCHDKPSGLDIGTGPKHEGSST).

This sequence belongs to the cation transport ATPase (P-type) (TC 3.A.3) family. Type IB subfamily. As to expression, predominantly expressed in the vascular tissues of roots, stems, and leaves. Also detected in developing anthers.

It is found in the cell membrane. The enzyme catalyses Zn(2+)(in) + ATP + H2O = Zn(2+)(out) + ADP + phosphate + H(+). It catalyses the reaction Cd(2+)(in) + ATP + H2O = Cd(2+)(out) + ADP + phosphate + H(+). Functionally, plays an important role in zinc transport and homeostasis. Could also be involved in cadmium detoxification. The protein is Cadmium/zinc-transporting ATPase HMA2 (HMA2) of Arabidopsis thaliana (Mouse-ear cress).